A 343-amino-acid polypeptide reads, in one-letter code: Nuclease EXOG, mitochondrial (343 aa).

Histidine 121 functions as the Proton acceptor in the catalytic mechanism. Position 152 (asparagine 152) interacts with a divalent metal cation.

The protein belongs to the DNA/RNA non-specific endonuclease family. Homodimer. A divalent metal cation is required as a cofactor.

Its subcellular location is the mitochondrion inner membrane. Functionally, endo/exonuclease with nicking activity towards supercoiled DNA, a preference for single-stranded DNA and 5'-3' exonuclease activity. The protein is Nuclease EXOG, mitochondrial (exog) of Danio rerio (Zebrafish).